Reading from the N-terminus, the 331-residue chain is Cytosolic sulfotransferase 1 (331 aa).

3'-phosphoadenylyl sulfate is bound at residue 74–79; that stretch reads KSGTTW. His-143 functions as the Proton acceptor in the catalytic mechanism. 3'-phosphoadenylyl sulfate contacts are provided by residues Arg-165, Ser-173, Tyr-231, and 297 to 299; that span reads RKG.

This sequence belongs to the sulfotransferase 1 family.

Its subcellular location is the cytoplasm. Sulfotransferase that utilizes 3'-phospho-5'-adenylyl sulfate (PAPS) as sulfonate donor. The sequence is that of Cytosolic sulfotransferase 1 (SOT1) from Arabidopsis thaliana (Mouse-ear cress).